We begin with the raw amino-acid sequence, 267 residues long: MKKVTIRDFIKKKSTKEKITMLTAYDYPTAKIISNTGLDSILVGDSLGMVVLGYANTLNVTMRDMISHTRAVARANPPQLIVADMPFLSYEIDTKSAIKNAGLLVKAGSDAIKLEGGEEMKDTVKAIVKAGIPVMGHIGLTPQRFLRLGGFRTIGKTKQEEDQLIKDSLELEDAGVFSLVIENTYVDIAKRITEKLNIPTICIGAGPYCDGQVLVINDLLGLSEFTPYFAKSYVNLKEIISNAINQYIIDVKNNKFPEKQHYKERES.

Mg(2+) contacts are provided by Asp-45 and Asp-84. Residues 45–46 (DS), Asp-84, and Lys-113 each bind 3-methyl-2-oxobutanoate. Glu-115 contacts Mg(2+). The active-site Proton acceptor is the Glu-182.

This sequence belongs to the PanB family. In terms of assembly, homodecamer; pentamer of dimers. Mg(2+) serves as cofactor.

It is found in the cytoplasm. It carries out the reaction 3-methyl-2-oxobutanoate + (6R)-5,10-methylene-5,6,7,8-tetrahydrofolate + H2O = 2-dehydropantoate + (6S)-5,6,7,8-tetrahydrofolate. The protein operates within cofactor biosynthesis; coenzyme A biosynthesis. Its function is as follows. Catalyzes the reversible reaction in which hydroxymethyl group from 5,10-methylenetetrahydrofolate is transferred onto alpha-ketoisovalerate to form ketopantoate. The polypeptide is 3-methyl-2-oxobutanoate hydroxymethyltransferase (Saccharolobus islandicus (strain L.S.2.15 / Lassen #1) (Sulfolobus islandicus)).